The chain runs to 147 residues: Sec-independent protein translocase protein TatB (147 aa).

The helical transmembrane segment at 2 to 22 (FDGIGFMELLLIGVLGLVVLG) threads the bilayer. Residues 68 to 147 (ESKGLSNLSP…DTRSNPKANG (80 aa)) form a disordered region. Polar residues predominate over residues 71–97 (GLSNLSPELQESIDQLKQAAQSVNRPY). Low complexity predominate over residues 112–133 (PASQSVSSEASPTASSAPTSEP).

The protein belongs to the TatB family. The Tat system comprises two distinct complexes: a TatABC complex, containing multiple copies of TatA, TatB and TatC subunits, and a separate TatA complex, containing only TatA subunits. Substrates initially bind to the TatABC complex, which probably triggers association of the separate TatA complex to form the active translocon.

The protein localises to the cell inner membrane. In terms of biological role, part of the twin-arginine translocation (Tat) system that transports large folded proteins containing a characteristic twin-arginine motif in their signal peptide across membranes. Together with TatC, TatB is part of a receptor directly interacting with Tat signal peptides. TatB may form an oligomeric binding site that transiently accommodates folded Tat precursor proteins before their translocation. The sequence is that of Sec-independent protein translocase protein TatB from Shewanella sp. (strain MR-4).